Reading from the N-terminus, the 645-residue chain is 1,4-alpha-glucan branching enzyme GlgB (645 aa).

Catalysis depends on Asp-309, which acts as the Nucleophile. Glu-352 serves as the catalytic Proton donor. The disordered stretch occupies residues Val-619–Arg-645. Over residues Arg-636–Arg-645 the composition is skewed to polar residues.

Belongs to the glycosyl hydrolase 13 family. GlgB subfamily. Monomer.

It carries out the reaction Transfers a segment of a (1-&gt;4)-alpha-D-glucan chain to a primary hydroxy group in a similar glucan chain.. It functions in the pathway glycan biosynthesis; glycogen biosynthesis. Catalyzes the formation of the alpha-1,6-glucosidic linkages in glycogen by scission of a 1,4-alpha-linked oligosaccharide from growing alpha-1,4-glucan chains and the subsequent attachment of the oligosaccharide to the alpha-1,6 position. This is 1,4-alpha-glucan branching enzyme GlgB from Bacillus cereus (strain ATCC 10987 / NRS 248).